Reading from the N-terminus, the 578-residue chain is Threonylcarbamoyladenosine tRNA methylthiotransferase (578 aa).

One can recognise an MTTase N-terminal domain in the interval 63–171 (QKIWIRTWGC…VVEVVEETIK (109 aa)). Cys72 and Cys108 together coordinate [4Fe-4S] cluster. Residue Ser121 is modified to Phosphoserine. [4Fe-4S] cluster is bound by residues Cys137, Cys213, Cys217, and Cys220. Positions 199 to 430 (RKNPLIEIIS…RVFHSYNPYD (232 aa)) constitute a Radical SAM core domain. The TRAM domain maps to 430 to 492 (DHKIGERQQV…KHFLKGQPVS (63 aa)). Residue Thr498 is modified to Phosphothreonine. Residues 553-570 (CALKVATGLALLALLLHF) form a helical membrane-spanning segment.

The protein belongs to the methylthiotransferase family. CDKAL1 subfamily. [4Fe-4S] cluster serves as cofactor. In terms of tissue distribution, expressed in pancreas, liver and skeletal muscle, especially in white muscle fibers.

It localises to the endoplasmic reticulum membrane. It catalyses the reaction N(6)-L-threonylcarbamoyladenosine(37) in tRNA + (sulfur carrier)-SH + AH2 + 2 S-adenosyl-L-methionine = 2-methylsulfanyl-N(6)-L-threonylcarbamoyladenosine(37) in tRNA + (sulfur carrier)-H + 5'-deoxyadenosine + L-methionine + A + S-adenosyl-L-homocysteine + 2 H(+). In terms of biological role, catalyzes the methylthiolation of N6-threonylcarbamoyladenosine (t(6)A), leading to the formation of 2-methylthio-N6-threonylcarbamoyladenosine (ms(2)t(6)A) at position 37 in tRNAs that read codons beginning with adenine. The sequence is that of Threonylcarbamoyladenosine tRNA methylthiotransferase (Cdkal1) from Mus musculus (Mouse).